The sequence spans 149 residues: Transcriptional repressor NrdR (149 aa).

A zinc finger spans residues 3-34 (CPFCSHQETQVVETRVSEDGDFIRRRRQCGAC). In terms of domain architecture, ATP-cone spans 49–139 (PTVVKKDGRR…VYRSFEDIDE (91 aa)).

The protein belongs to the NrdR family. The cofactor is Zn(2+).

In terms of biological role, negatively regulates transcription of bacterial ribonucleotide reductase nrd genes and operons by binding to NrdR-boxes. The protein is Transcriptional repressor NrdR of Acidovorax sp. (strain JS42).